The sequence spans 968 residues: RNA polymerase-associated protein RapA (968 aa).

Positions 164–334 constitute a Helicase ATP-binding domain; the sequence is DVGRRHAPRV…FARLRLLDPN (171 aa). Position 177 to 184 (177 to 184) interacts with ATP; it reads DEVGLGKT. Positions 280-283 match the DEAH box motif; the sequence is DEAH. A Helicase C-terminal domain is found at 490 to 685; the sequence is RVEWLMGYLT…ALKAQLEQGR (196 aa).

Belongs to the SNF2/RAD54 helicase family. RapA subfamily. Interacts with the RNAP. Has a higher affinity for the core RNAP than for the holoenzyme. Its ATPase activity is stimulated by binding to RNAP.

Transcription regulator that activates transcription by stimulating RNA polymerase (RNAP) recycling in case of stress conditions such as supercoiled DNA or high salt concentrations. Probably acts by releasing the RNAP, when it is trapped or immobilized on tightly supercoiled DNA. Does not activate transcription on linear DNA. Probably not involved in DNA repair. This chain is RNA polymerase-associated protein RapA, found in Salmonella typhimurium (strain LT2 / SGSC1412 / ATCC 700720).